A 207-amino-acid polypeptide reads, in one-letter code: Nitrile hydratase subunit alpha (207 aa).

Fe(3+) contacts are provided by cysteine 110, cysteine 113, serine 114, and cysteine 115. Cysteine sulfinic acid (-SO2H) is present on cysteine 113. At cysteine 115 the chain carries Cysteine sulfenic acid (-SOH).

The protein belongs to the nitrile hydratase subunit alpha family. Heterodimer of an alpha and a beta chain. The cofactor is Fe(3+). In terms of processing, oxidation on Cys-113 is essential for the activity. Oxidation on Cys-115 stabilizes the Fe-NO ligand coordinated in the inactive form.

It carries out the reaction an aliphatic primary amide = an aliphatic nitrile + H2O. Inactivated by nitrosylation of the iron center in the dark and activated by photo-induced nitric oxide (NO) release. Inactivated by oxidation of Cys-115 to a sulfenic acid. In terms of biological role, NHase catalyzes the hydration of various nitrile compounds to the corresponding amides. Industrial production of acrylamide is now being developed using some of the enzymes of this class. The chain is Nitrile hydratase subunit alpha (nthA) from Rhodococcus erythropolis (Arthrobacter picolinophilus).